A 117-amino-acid polypeptide reads, in one-letter code: Large ribosomal subunit protein uL18 (117 aa).

It belongs to the universal ribosomal protein uL18 family. As to quaternary structure, part of the 50S ribosomal subunit; part of the 5S rRNA/L5/L18/L25 subcomplex. Contacts the 5S and 23S rRNAs.

This is one of the proteins that bind and probably mediate the attachment of the 5S RNA into the large ribosomal subunit, where it forms part of the central protuberance. This is Large ribosomal subunit protein uL18 from Hydrogenovibrio crunogenus (strain DSM 25203 / XCL-2) (Thiomicrospira crunogena).